The chain runs to 380 residues: Cytochrome b (380 aa).

4 helical membrane-spanning segments follow: residues 33 to 53, 77 to 98, 113 to 133, and 178 to 198; these read FGSL…FLAM, WLIR…FLHV, WNMG…GYVL, and FFAF…VHLL. Positions 83 and 97 each coordinate heme b. Heme b is bound by residues H182 and H196. An a ubiquinone-binding site is contributed by H201. 4 helical membrane passes run 226–246, 288–308, 320–340, and 347–367; these read IKDF…TLFF, LGGV…PLLH, ITQI…WIGG, and FITI…IFMP.

This sequence belongs to the cytochrome b family. In terms of assembly, the cytochrome bc1 complex contains 11 subunits: 3 respiratory subunits (MT-CYB, CYC1 and UQCRFS1), 2 core proteins (UQCRC1 and UQCRC2) and 6 low-molecular weight proteins (UQCRH/QCR6, UQCRB/QCR7, UQCRQ/QCR8, UQCR10/QCR9, UQCR11/QCR10 and a cleavage product of UQCRFS1). This cytochrome bc1 complex then forms a dimer. Heme b serves as cofactor.

The protein resides in the mitochondrion inner membrane. Component of the ubiquinol-cytochrome c reductase complex (complex III or cytochrome b-c1 complex) that is part of the mitochondrial respiratory chain. The b-c1 complex mediates electron transfer from ubiquinol to cytochrome c. Contributes to the generation of a proton gradient across the mitochondrial membrane that is then used for ATP synthesis. This is Cytochrome b (MT-CYB) from Microtus oregoni (Creeping vole).